A 594-amino-acid polypeptide reads, in one-letter code: DNA ligase (594 aa).

Glu256 provides a ligand contact to ATP. Lys258 (N6-AMP-lysine intermediate) is an active-site residue. ATP is bound by residues Arg263, Arg279, Glu309, Phe349, Arg426, and Lys432.

Belongs to the ATP-dependent DNA ligase family. Requires Mg(2+) as cofactor.

The enzyme catalyses ATP + (deoxyribonucleotide)n-3'-hydroxyl + 5'-phospho-(deoxyribonucleotide)m = (deoxyribonucleotide)n+m + AMP + diphosphate.. Functionally, DNA ligase that seals nicks in double-stranded DNA during DNA replication, DNA recombination and DNA repair. This chain is DNA ligase, found in Ignicoccus hospitalis (strain KIN4/I / DSM 18386 / JCM 14125).